A 109-amino-acid polypeptide reads, in one-letter code: UPF0060 membrane protein YfjF (109 aa).

4 consecutive transmembrane segments (helical) span residues 6–26 (ILLF…VWLW), 32–52 (PAGY…LPTF), 61–81 (VYAA…WLVD), and 87–107 (LYDW…LFAP).

It belongs to the UPF0060 family.

The protein localises to the cell membrane. The protein is UPF0060 membrane protein YfjF (yfjF) of Bacillus subtilis (strain 168).